The following is a 422-amino-acid chain: Imidazolonepropionase (422 aa).

The Fe(3+) site is built by His-82 and His-84. His-82 and His-84 together coordinate Zn(2+). 4-imidazolone-5-propanoate is bound by residues Arg-91, Tyr-154, and His-187. Tyr-154 contributes to the N-formimidoyl-L-glutamate binding site. His-252 contributes to the Fe(3+) binding site. Residue His-252 participates in Zn(2+) binding. Position 255 (Glu-255) interacts with 4-imidazolone-5-propanoate. Position 327 (Asp-327) interacts with Fe(3+). Zn(2+) is bound at residue Asp-327. Residues Asn-329 and Gly-331 each contribute to the N-formimidoyl-L-glutamate site. Ser-332 serves as a coordination point for 4-imidazolone-5-propanoate.

It belongs to the metallo-dependent hydrolases superfamily. HutI family. It depends on Zn(2+) as a cofactor. Fe(3+) serves as cofactor.

The protein localises to the cytoplasm. It catalyses the reaction 4-imidazolone-5-propanoate + H2O = N-formimidoyl-L-glutamate. It participates in amino-acid degradation; L-histidine degradation into L-glutamate; N-formimidoyl-L-glutamate from L-histidine: step 3/3. Functionally, catalyzes the hydrolytic cleavage of the carbon-nitrogen bond in imidazolone-5-propanoate to yield N-formimidoyl-L-glutamate. It is the third step in the universal histidine degradation pathway. This is Imidazolonepropionase from Alkaliphilus metalliredigens (strain QYMF).